The following is a 222-amino-acid chain: Putative N-acetylmannosamine-6-phosphate 2-epimerase (222 aa).

Belongs to the NanE family.

It carries out the reaction an N-acyl-D-glucosamine 6-phosphate = an N-acyl-D-mannosamine 6-phosphate. Its pathway is amino-sugar metabolism; N-acetylneuraminate degradation; D-fructose 6-phosphate from N-acetylneuraminate: step 3/5. Converts N-acetylmannosamine-6-phosphate (ManNAc-6-P) to N-acetylglucosamine-6-phosphate (GlcNAc-6-P). The protein is Putative N-acetylmannosamine-6-phosphate 2-epimerase of Staphylococcus aureus (strain USA300).